A 105-amino-acid polypeptide reads, in one-letter code: Co-chaperonin GroES (105 aa).

Belongs to the GroES chaperonin family. As to quaternary structure, heptamer of 7 subunits arranged in a ring. Interacts with the chaperonin GroEL.

Its subcellular location is the cytoplasm. In terms of biological role, together with the chaperonin GroEL, plays an essential role in assisting protein folding. The GroEL-GroES system forms a nano-cage that allows encapsulation of the non-native substrate proteins and provides a physical environment optimized to promote and accelerate protein folding. GroES binds to the apical surface of the GroEL ring, thereby capping the opening of the GroEL channel. This Parvibaculum lavamentivorans (strain DS-1 / DSM 13023 / NCIMB 13966) protein is Co-chaperonin GroES.